A 159-amino-acid polypeptide reads, in one-letter code: Small ribosomal subunit protein uS4 (159 aa).

The region spanning 106–158 (RRLQTIVYRKGLAKSIYHARQLVVHGHVAVAGRRVTSPGFLVPRDLEDKITLI) is the S4 RNA-binding domain.

Belongs to the universal ribosomal protein uS4 family. In terms of assembly, part of the 30S ribosomal subunit. Contacts protein S5. The interaction surface between S4 and S5 is involved in control of translational fidelity.

One of the primary rRNA binding proteins, it binds directly to 16S rRNA where it nucleates assembly of the body of the 30S subunit. Functionally, with S5 and S12 plays an important role in translational accuracy. This chain is Small ribosomal subunit protein uS4, found in Pyrobaculum islandicum (strain DSM 4184 / JCM 9189 / GEO3).